The primary structure comprises 105 residues: Nitrogenase-stabilizing/protective protein NifW (105 aa).

It belongs to the NifW family. In terms of assembly, homotrimer; associates with NifD.

May protect the nitrogenase Fe-Mo protein from oxidative damage. The chain is Nitrogenase-stabilizing/protective protein NifW from Nostoc punctiforme (strain ATCC 29133 / PCC 73102).